The primary structure comprises 246 residues: MLVLFVATWSDLGLCKKRPKPGGWNTGGSRYPGQGSPGGNRYPPQGGGGWGQPHGGGWGQPHGGGWGQPHGGGWGQPHGGGWGQGGGTHNQWHKPSKPKTSMKHMAGAAAAGAVVGGLGGYMLGSAMSRPLIHFGNEYEDRYYRENMYRYPNQVYYRPVDQYSNQNNFVHDCVNITIKQHTVTTTTKGENFTETDVKMMERVVEQMCITQYEKESQAYYQRGSSMVLFSSPPVILLISFLIFLIVG.

A signal peptide spans 1 to 15; it reads MLVLFVATWSDLGLC. The interval 16 to 223 is interaction with GRB2, ERI3 and SYN1; sequence KKRPKPGGWN…ESQAYYQRGS (208 aa). A disordered region spans residues 18–102; the sequence is RPKPGGWNTG…HKPSKPKTSM (85 aa). Repeat copies occupy residues 44–52, 53–60, 61–68, 69–76, and 77–84. The tract at residues 44–84 is 5 X 8 AA tandem repeats of P-H-G-G-G-W-G-Q; sequence PQGGGGWGQPHGGGWGQPHGGGWGQPHGGGWGQPHGGGWGQ. Positions 45–88 are enriched in gly residues; that stretch reads QGGGGWGQPHGGGWGQPHGGGWGQPHGGGWGQPHGGGWGQGGGT. Cu(2+) contacts are provided by His-54, Gly-55, Gly-56, His-62, Gly-63, Gly-64, His-70, Gly-71, Gly-72, His-78, Gly-79, and Gly-80. Residues 91–102 are compositionally biased toward basic residues; that stretch reads QWHKPSKPKTSM. A disulfide bridge links Cys-172 with Cys-207. N-linked (GlcNAc...) asparagine glycans are attached at residues Asn-174 and Asn-190. Ser-223 carries the GPI-anchor amidated serine lipid modification. Residues 224 to 246 constitute a propeptide, removed in mature form; it reads SMVLFSSPPVILLISFLIFLIVG.

This sequence belongs to the prion family. As to quaternary structure, monomer and homodimer. Has a tendency to aggregate into amyloid fibrils containing a cross-beta spine, formed by a steric zipper of superposed beta-strands. Soluble oligomers may represent an intermediate stage on the path to fibril formation. Copper binding may promote oligomerization. Interacts with GRB2, APP, ERI3/PRNPIP and SYN1. Mislocalized cytosolically exposed PrP interacts with MGRN1; this interaction alters MGRN1 subcellular location and causes lysosomal enlargement. Interacts with KIAA1191.

Its subcellular location is the cell membrane. It is found in the golgi apparatus. In terms of biological role, its primary physiological function is unclear. Has cytoprotective activity against internal or environmental stresses. May play a role in neuronal development and synaptic plasticity. May be required for neuronal myelin sheath maintenance. May play a role in iron uptake and iron homeostasis. Soluble oligomers are toxic to cultured neuroblastoma cells and induce apoptosis (in vitro). Association with GPC1 (via its heparan sulfate chains) targets PRNP to lipid rafts. Also provides Cu(2+) or Zn(2+) for the ascorbate-mediated GPC1 deaminase degradation of its heparan sulfate side chains. This chain is Major prion protein (PRNP), found in Cercocebus atys (Sooty mangabey).